The sequence spans 406 residues: Putative cyclin-F3-2 (406 aa).

Residues 1–107 (MARPRTRSVA…PGAAGGPWQL (107 aa)) form a disordered region. 2 stretches are compositionally biased toward low complexity: residues 11–21 (RMEATAAAAAA) and 29–57 (NPDG…NAGE).

It belongs to the cyclin family. Cyclin F subfamily.

The polypeptide is Putative cyclin-F3-2 (CYCF3-2) (Oryza sativa subsp. japonica (Rice)).